The chain runs to 143 residues: Transcriptional regulator MraZ (143 aa).

SpoVT-AbrB domains are found at residues 5–47 and 76–119; these read EFEH…PLSE and AVQC…NKAR.

This sequence belongs to the MraZ family. As to quaternary structure, forms oligomers.

It is found in the cytoplasm. The protein resides in the nucleoid. This chain is Transcriptional regulator MraZ, found in Pediococcus pentosaceus (strain ATCC 25745 / CCUG 21536 / LMG 10740 / 183-1w).